The chain runs to 298 residues: MTDLHTDVERYLRYLSVERQLSPITLLNYQRQLEAIINFASENGLQNWQQCDAAMVRNFAVRSRRKGLGAASLALRLSALRSFFDWLVSQNELKANPAKGVSAPKTPRHLPKNIDVDDINRLLDIDINDPLAVRDRAMLEVMYGAGLRLSELVGLDIKHLDLESGEVWVMGKGSKERRLPIGRNALSWIEHWLDLRDLFGSEDDALFLSKLGKRISARNVQKRFAEWGIKQGLNNHVHPHKLRHSFATHMLESSGDLRGVQELLGHANLSTTQIYTHLDFQHLASVYDAAHPRAKRGK.

One can recognise a Core-binding (CB) domain in the interval 2 to 88; sequence TDLHTDVERY…ALRSFFDWLV (87 aa). Positions 109 to 288 constitute a Tyr recombinase domain; that stretch reads HLPKNIDVDD…DFQHLASVYD (180 aa). Catalysis depends on residues arginine 148, lysine 172, histidine 240, arginine 243, and histidine 266. Tyrosine 275 (O-(3'-phospho-DNA)-tyrosine intermediate) is an active-site residue.

Belongs to the 'phage' integrase family. XerC subfamily. Forms a cyclic heterotetrameric complex composed of two molecules of XerC and two molecules of XerD, in which XerC interacts with XerD via its C-terminal region, XerD interacts with XerC via its C-terminal region and so on.

The protein resides in the cytoplasm. Its activity is regulated as follows. FtsK may regulate the catalytic switch between XerC and XerD in the heterotetrameric complex during the two steps of the recombination process. Functionally, site-specific tyrosine recombinase, which acts by catalyzing the cutting and rejoining of the recombining DNA molecules. Binds cooperatively to specific DNA consensus sequences that are separated from XerD binding sites by a short central region, forming the heterotetrameric XerC-XerD complex that recombines DNA substrates. The complex is essential to convert dimers of the bacterial chromosome into monomers to permit their segregation at cell division. It also contributes to the segregational stability of plasmids. In the complex XerC specifically exchanges the top DNA strands. The polypeptide is Tyrosine recombinase XerC (Escherichia coli O157:H7).